Reading from the N-terminus, the 681-residue chain is Transcriptional regulator prz1 (681 aa).

A compositionally biased stretch (basic and acidic residues) spans 1-15 (MERQRSEEANRRFKD). 5 disordered regions span residues 1–29 (MERQ…SKPD), 66–96 (NPSK…DSYP), 340–372 (SHQS…NSPF), 410–433 (PQIN…ANPL), and 520–563 (KIEN…AKSE). 2 stretches are compositionally biased toward polar residues: residues 66 to 86 (NPSK…FKTS) and 340 to 358 (SHQS…LNSE). The span at 416–428 (PSSPSKSQSGPSL) shows a compositional bias: low complexity. Positions 528–549 (SNDYLSVRNTRPRSRSLNSLVG) are enriched in polar residues. Phosphoserine is present on residues Ser-543 and Ser-546. A compositionally biased stretch (low complexity) spans 550–559 (NKSENSSSSK). 2 consecutive C2H2-type zinc fingers follow at residues 570-594 (YVCT…MNTH) and 600-622 (FQCS…EQLH). The C2H2-type 3; degenerate zinc finger occupies 628–650 (FACVTCNQRFARMDALNRHYKSE). A disordered region spans residues 662–681 (RGIQVPPSRKTAVASTSKQK).

This sequence belongs to the EGR C2H2-type zinc-finger protein family. Phosphorylated. Dephosphorylated by calcineurin which leads to rapid translocation from the cytoplasm to the nucleus.

The protein resides in the nucleus. It localises to the cytoplasm. Functionally, involved in the regulation of calcium ion homeostasis. Binds to the calcineurin-dependent response element. Transcriptionally regulates pmc1. The polypeptide is Transcriptional regulator prz1 (prz1) (Schizosaccharomyces pombe (strain 972 / ATCC 24843) (Fission yeast)).